Here is a 247-residue protein sequence, read N- to C-terminus: Homeobox-leucine zipper protein HOX17 (247 aa).

Positions 58–81 (ERAGLRGGGGSDEEDGGCGIDGSR) are disordered. A DNA-binding region (homeobox) is located at residues 79-138 (GSRKKLRLSKDQSAVLEDSFREHPTLNPRQKATLAQQLGLRPRQVEVWFQNRRARTKLKQ). The tract at residues 137 to 182 (KQTEVDCEFLKRCCETLTEENRRLQKEVQELRALKLVSPHLYMNMS) is leucine-zipper.

Belongs to the HD-ZIP homeobox family. Class II subfamily. As to expression, expressed in seedlings, roots, stems, leaf sheaths and blades and panicles.

The protein localises to the nucleus. Probable transcription factor. This chain is Homeobox-leucine zipper protein HOX17 (HOX17), found in Oryza sativa subsp. indica (Rice).